The sequence spans 399 residues: Phosphomevalonate dehydratase large subunit (399 aa).

Residues Gly54, Val55, Ser56, Asn85, and Pro86 each coordinate (R)-5-phosphomevalonate. Residue Cys125 coordinates [4Fe-4S] cluster. (R)-5-phosphomevalonate-binding residues include Glu144 and Ser145. Residues Cys298 and Cys355 each coordinate [4Fe-4S] cluster. Lys375 is a (R)-5-phosphomevalonate binding site.

Belongs to the AcnX type II large subunit family. In terms of assembly, heterodimer composed of a large subunit (PMDh-L) and a small subunit (PMDh-S). [4Fe-4S] cluster is required as a cofactor.

The catalysed reaction is (R)-5-phosphomevalonate = (2E)-3-methyl-5-phosphooxypent-2-enoate + H2O. The protein operates within isoprenoid biosynthesis; isopentenyl diphosphate biosynthesis via mevalonate pathway. Component of a hydro-lyase that catalyzes the dehydration of mevalonate 5-phosphate (MVA5P) to form trans-anhydromevalonate 5-phosphate (tAHMP). Involved in the archaeal mevalonate (MVA) pathway, which provides fundamental precursors for isoprenoid biosynthesis, such as isopentenyl diphosphate (IPP) and dimethylallyl diphosphate (DMAPP). This chain is Phosphomevalonate dehydratase large subunit, found in Methanothermobacter thermautotrophicus (strain ATCC 29096 / DSM 1053 / JCM 10044 / NBRC 100330 / Delta H) (Methanobacterium thermoautotrophicum).